An 89-amino-acid polypeptide reads, in one-letter code: Large ribosomal subunit protein bL27 (89 aa).

The segment at 1–21 is disordered; it reads MAHKKAGGSSRNGRDSAGRRL.

The protein belongs to the bacterial ribosomal protein bL27 family.

In Erythrobacter litoralis (strain HTCC2594), this protein is Large ribosomal subunit protein bL27.